A 428-amino-acid chain; its full sequence is Histidine--tRNA ligase (428 aa).

The protein belongs to the class-II aminoacyl-tRNA synthetase family. As to quaternary structure, homodimer.

The protein localises to the cytoplasm. The catalysed reaction is tRNA(His) + L-histidine + ATP = L-histidyl-tRNA(His) + AMP + diphosphate + H(+). The chain is Histidine--tRNA ligase from Thermosynechococcus vestitus (strain NIES-2133 / IAM M-273 / BP-1).